We begin with the raw amino-acid sequence, 172 residues long: Transcriptional activator protein (172 aa).

The Nuclear localization signal motif lies at 56 to 71 (KAQHRIAKHKAIRRRR). A zinc finger spans residues 76 to 93 (CGCSIFYHIKCADHGFTH). Residues 119–172 (DHAGGRSSIHTDKDIPHPSQVQSQPQESTGSPQSIPELPSLDDIDSSFWDDIFK) form a disordered region. Positions 137 to 152 (SQVQSQPQESTGSPQS) are enriched in polar residues. Positions 158 to 172 (SLDDIDSSFWDDIFK) are transactivation.

Belongs to the geminiviridae transcriptional activator protein family. As to quaternary structure, monomer. Homodimer. Homooligomer. Self-interaction correlates with nuclear localization and efficient activation of transcription. Monomers suppress local silencing by interacting with and inactivating host adenosine kinase 2 (ADK2) in the cytoplasm. Interacts with and inhibits host SNF1 kinase. Binds to ssDNA. Post-translationally, phosphorylated.

Its subcellular location is the host nucleus. It localises to the host cytoplasm. Strong activator of the late viral genes promoters. Enhances the expression of the capsid protein and nuclear shuttle protein. Acts as a suppressor of RNA-mediated gene silencing, also known as post-transcriptional gene silencing (PTGS), a mechanism of plant viral defense that limits the accumulation of viral RNAs. Suppresses the host RNA silencing by inhibiting adenosine kinase 2 (ADK2), a kinase involved in a general methylation pathway. Also suppresses the host basal defense by interacting with and inhibiting SNF1 kinase, a key regulator of cell metabolism implicated in innate antiviral defense. Determines pathogenicity. The polypeptide is Transcriptional activator protein (Bean golden yellow mosaic virus (isolate Puerto Rico-Japan) (BGYMV)).